We begin with the raw amino-acid sequence, 418 residues long: Glycine betaine transport ATP-binding protein OpuAA (418 aa).

One can recognise an ABC transporter domain in the interval 34–270 (KTKKEILKAT…PSNEYVEKFV (237 aa)). Position 66–73 (66–73 (GLSGSGKS)) interacts with ATP. CBS domains lie at 284-340 (IMKR…DLSL) and 344-403 (LNTE…INAE).

Belongs to the ABC transporter superfamily. As to quaternary structure, the complex is composed of two ATP-binding proteins (OpuAA), two transmembrane proteins (OpuAB) and a solute-binding protein (OpuAC).

It catalyses the reaction a quaternary ammonium(out) + ATP + H2O = a quaternary ammonium(in) + ADP + phosphate + H(+). Functionally, involved in a multicomponent binding-protein-dependent transport system for glycine betaine. Probably responsible for energy coupling to the transport system. The chain is Glycine betaine transport ATP-binding protein OpuAA (opuAA) from Bacillus subtilis (strain 168).